The chain runs to 214 residues: Thymidylate kinase (214 aa).

7–14 (GVDGAGKR) serves as a coordination point for ATP. D9, Y39, F70, R74, R95, N100, and Y103 together coordinate dTMP. D9 is a Mg(2+) binding site. The LID stretch occupies residues 147–159 (GERSRGRAQRDPG). Residues D163 and Y165 each contribute to the dTMP site. E166 is a binding site for Mg(2+).

Belongs to the thymidylate kinase family. In terms of assembly, homodimer. Mg(2+) is required as a cofactor.

The enzyme catalyses dTMP + ATP = dTDP + ADP. Its pathway is pyrimidine metabolism; dTTP biosynthesis. Its function is as follows. Catalyzes the reversible phosphorylation of deoxythymidine monophosphate (dTMP) to deoxythymidine diphosphate (dTDP), using ATP as its preferred phosphoryl donor. Situated at the junction of both de novo and salvage pathways of deoxythymidine triphosphate (dTTP) synthesis, is essential for DNA synthesis and cellular growth. The protein is Thymidylate kinase (tmk) of Mycobacterium tuberculosis (strain CDC 1551 / Oshkosh).